We begin with the raw amino-acid sequence, 81 residues long: Acyl carrier protein (81 aa).

One can recognise a Carrier domain in the interval 5-80 (EEIFSKVKSI…DIVSYIEKKL (76 aa)). O-(pantetheine 4'-phosphoryl)serine is present on serine 40.

It belongs to the acyl carrier protein (ACP) family. 4'-phosphopantetheine is transferred from CoA to a specific serine of apo-ACP by AcpS. This modification is essential for activity because fatty acids are bound in thioester linkage to the sulfhydryl of the prosthetic group.

It localises to the cytoplasm. Its pathway is lipid metabolism; fatty acid biosynthesis. In terms of biological role, carrier of the growing fatty acid chain in fatty acid biosynthesis. This chain is Acyl carrier protein, found in Thermotoga maritima (strain ATCC 43589 / DSM 3109 / JCM 10099 / NBRC 100826 / MSB8).